The sequence spans 81 residues: Serine/arginine-rich splicing factor 6 (81 aa).

Residues 1–48 (RSRSRSRRSSRSRSRSISKSRSRSRSRSKGRSRSRSKGRKSRSKSKSK) are compositionally biased toward basic residues. The tract at residues 1-81 (RSRSRSRRSS…SRSRSRSRSP (81 aa)) is disordered. A compositionally biased stretch (basic and acidic residues) spans 62 to 71 (RSKDEYEKSR). Residues 72–81 (SRSRSRSRSP) are compositionally biased toward basic residues.

The protein belongs to the splicing factor SR family. Binds SREK1/SFRS12. Interacts with DYRK1A. Extensively phosphorylated on serine residues in the RS domain. Phosphorylated by DYRK1A, probably in the RS domain. Phosphorylation by DYRK1A modulates alternative splice site selection and inhibits the expression of MAPT/Tau exon 10.

Its subcellular location is the nucleus. The protein resides in the nucleus speckle. Plays a role in constitutive splicing and modulates the selection of alternative splice sites. Plays a role in the alternative splicing of MAPT/Tau exon 10. Binds to alternative exons of TNC pre-mRNA and promotes the expression of alternatively spliced TNC. Plays a role in wound healing and in the regulation of keratinocyte differentiation and proliferation via its role in alternative splicing. The chain is Serine/arginine-rich splicing factor 6 (SRSF6) from Oryctolagus cuniculus (Rabbit).